Consider the following 1072-residue polypeptide: Carbamoyl phosphate synthase large chain (1072 aa).

The tract at residues 1–401 (MPKRLDINTI…SLLKAVRSLE (401 aa)) is carboxyphosphate synthetic domain. Positions 129, 169, 175, 176, 208, 210, 215, 241, 242, 243, 284, and 298 each coordinate ATP. In terms of domain architecture, ATP-grasp 1 spans 133 to 327 (RTLMQELNEP…IAKLAAKIAV (195 aa)). The Mg(2+) site is built by glutamine 284, glutamate 298, and asparagine 300. Positions 284, 298, and 300 each coordinate Mn(2+). The interval 402–546 (LGIYHLELDH…YSTYADENEL (145 aa)) is oligomerization domain. The segment at 547-929 (IVTDRKSVVV…ALYKGLVASG (383 aa)) is carbamoyl phosphate synthetic domain. Positions 671–861 (EAALTKLGIP…MANVATKVIL (191 aa)) constitute an ATP-grasp 2 domain. Residues arginine 707, arginine 746, glutamate 752, glycine 777, valine 778, histidine 779, serine 780, glutamine 820, and glutamate 832 each contribute to the ATP site. Positions 820, 832, and 834 each coordinate Mg(2+). Mn(2+) is bound by residues glutamine 820, glutamate 832, and asparagine 834. Residues 930–1072 (INIPTHGSVI…QTKRHEVVHA (143 aa)) enclose the MGS-like domain. The tract at residues 930 to 1072 (INIPTHGSVI…QTKRHEVVHA (143 aa)) is allosteric domain.

The protein belongs to the CarB family. In terms of assembly, composed of two chains; the small (or glutamine) chain promotes the hydrolysis of glutamine to ammonia, which is used by the large (or ammonia) chain to synthesize carbamoyl phosphate. Tetramer of heterodimers (alpha,beta)4. Mg(2+) serves as cofactor. Requires Mn(2+) as cofactor.

It carries out the reaction hydrogencarbonate + L-glutamine + 2 ATP + H2O = carbamoyl phosphate + L-glutamate + 2 ADP + phosphate + 2 H(+). The enzyme catalyses hydrogencarbonate + NH4(+) + 2 ATP = carbamoyl phosphate + 2 ADP + phosphate + 2 H(+). Its pathway is amino-acid biosynthesis; L-arginine biosynthesis; carbamoyl phosphate from bicarbonate: step 1/1. It functions in the pathway pyrimidine metabolism; UMP biosynthesis via de novo pathway; (S)-dihydroorotate from bicarbonate: step 1/3. Large subunit of the glutamine-dependent carbamoyl phosphate synthetase (CPSase). CPSase catalyzes the formation of carbamoyl phosphate from the ammonia moiety of glutamine, carbonate, and phosphate donated by ATP, constituting the first step of 2 biosynthetic pathways, one leading to arginine and/or urea and the other to pyrimidine nucleotides. The large subunit (synthetase) binds the substrates ammonia (free or transferred from glutamine from the small subunit), hydrogencarbonate and ATP and carries out an ATP-coupled ligase reaction, activating hydrogencarbonate by forming carboxy phosphate which reacts with ammonia to form carbamoyl phosphate. This Bacillus anthracis (strain A0248) protein is Carbamoyl phosphate synthase large chain.